A 191-amino-acid polypeptide reads, in one-letter code: Protein GrpE (191 aa).

Over residues 1-19 (MKDEHNQKHDHLSQKEPES) the composition is skewed to basic and acidic residues. A disordered region spans residues 1–44 (MKDEHNQKHDHLSQKEPESYQKACACKEQQDEEMQEAGEKEGEI).

This sequence belongs to the GrpE family. In terms of assembly, homodimer.

It localises to the cytoplasm. Participates actively in the response to hyperosmotic and heat shock by preventing the aggregation of stress-denatured proteins, in association with DnaK and GrpE. It is the nucleotide exchange factor for DnaK and may function as a thermosensor. Unfolded proteins bind initially to DnaJ; upon interaction with the DnaJ-bound protein, DnaK hydrolyzes its bound ATP, resulting in the formation of a stable complex. GrpE releases ADP from DnaK; ATP binding to DnaK triggers the release of the substrate protein, thus completing the reaction cycle. Several rounds of ATP-dependent interactions between DnaJ, DnaK and GrpE are required for fully efficient folding. In Helicobacter pylori (strain G27), this protein is Protein GrpE.